Consider the following 1225-residue polypeptide: DNA-directed RNA polymerase subunit beta' (1225 aa).

Residues Cys-60, Cys-62, Cys-75, and Cys-78 each coordinate Zn(2+). Mg(2+) is bound by residues Asp-450, Asp-452, and Asp-454. Zn(2+) is bound by residues Cys-818, Cys-892, Cys-899, and Cys-902.

It belongs to the RNA polymerase beta' chain family. As to quaternary structure, the RNAP catalytic core consists of 2 alpha, 1 beta, 1 beta' and 1 omega subunit. When a sigma factor is associated with the core the holoenzyme is formed, which can initiate transcription. The cofactor is Mg(2+). Zn(2+) serves as cofactor.

It catalyses the reaction RNA(n) + a ribonucleoside 5'-triphosphate = RNA(n+1) + diphosphate. DNA-dependent RNA polymerase catalyzes the transcription of DNA into RNA using the four ribonucleoside triphosphates as substrates. This chain is DNA-directed RNA polymerase subunit beta', found in Streptococcus pneumoniae (strain ATCC 700669 / Spain 23F-1).